A 243-amino-acid chain; its full sequence is Ribosomal RNA small subunit methyltransferase G (243 aa).

Residues glycine 79, phenylalanine 84, 130-131 (AE), and arginine 150 contribute to the S-adenosyl-L-methionine site. The tract at residues 222–243 (KPTPNKYPRKPGIPNKQPLGGA) is disordered.

This sequence belongs to the methyltransferase superfamily. RNA methyltransferase RsmG family.

Its subcellular location is the cytoplasm. Its function is as follows. Specifically methylates the N7 position of a guanine in 16S rRNA. This Lacticaseibacillus paracasei (strain ATCC 334 / BCRC 17002 / CCUG 31169 / CIP 107868 / KCTC 3260 / NRRL B-441) (Lactobacillus paracasei) protein is Ribosomal RNA small subunit methyltransferase G.